A 626-amino-acid polypeptide reads, in one-letter code: Chaperone protein HtpG (626 aa).

Residues 1-341 (MAKKEFKAES…SEDLSLNISR (341 aa)) are a; substrate-binding. Residues 342-552 (EMLQHDRQLK…DGEVTIEMEK (211 aa)) form a b region. The tract at residues 553-626 (ILNAMPDSQN…FTNNICKVMV (74 aa)) is c.

It belongs to the heat shock protein 90 family. In terms of assembly, homodimer.

The protein localises to the cytoplasm. Molecular chaperone. Has ATPase activity. This Bacillus subtilis (strain 168) protein is Chaperone protein HtpG.